Consider the following 336-residue polypeptide: CMP-sialic acid transporter (336 aa).

At Met-1–Ser-9 the chain is on the cytoplasmic side. The helical transmembrane segment at Leu-10 to Ala-30 threads the bilayer. Topologically, residues Leu-31–Thr-45 are lumenal. The chain crosses the membrane as a helical span at residues Thr-46–Ala-64. Lys-55 contacts CMP-N-acetyl-beta-neuraminate. Residues Lys-65 to Glu-87 are Cytoplasmic-facing. The chain crosses the membrane as a helical span at residues Leu-88–Ala-108. A CMP-N-acetyl-beta-neuraminate-binding site is contributed by Gln-101–Asn-102. Over Leu-109–Ala-114 the chain is Lumenal. The helical transmembrane segment at Ala-115 to Met-135 threads the bilayer. A CMP-N-acetyl-beta-neuraminate-binding site is contributed by Tyr-117 to Lys-124. Topologically, residues Leu-136–Ser-141 are cytoplasmic. A helical transmembrane segment spans residues Lys-142 to Trp-160. The Lumenal portion of the chain corresponds to Lys-161–Leu-175. A helical membrane pass occupies residues Leu-176–Glu-196. Ser-188 is a CMP-N-acetyl-beta-neuraminate binding site. At Lys-197–Arg-209 the chain is on the cytoplasmic side. CMP-N-acetyl-beta-neuraminate is bound at residue Asn-210–Tyr-214. The chain crosses the membrane as a helical span at residues Asn-210–Ser-228. The Lumenal portion of the chain corresponds to Asp-229–Thr-243. Residues Tyr-244–Val-262 traverse the membrane as a helical segment. At Val-263–Asn-269 the chain is on the cytoplasmic side. A helical membrane pass occupies residues Ile-270–Val-288. A CMP-N-acetyl-beta-neuraminate-binding site is contributed by Lys-272. Residues Leu-289–Thr-296 are Lumenal-facing. Residues Leu-297 to Leu-315 form a helical membrane-spanning segment. Residues Pro-316 to Val-336 lie on the Cytoplasmic side of the membrane. The tract at residues Pro-316–Val-336 is disordered.

It belongs to the nucleotide-sugar transporter family. SLC35A subfamily. As to quaternary structure, monomer. As to expression, ubiquitous. Found in all the tissues examined including skeletal muscle, brain, heart, liver, kidney and spleen.

It is found in the golgi apparatus membrane. The enzyme catalyses CMP-N-acetyl-beta-neuraminate(in) + CMP(out) = CMP-N-acetyl-beta-neuraminate(out) + CMP(in). It carries out the reaction CMP-N-acetyl-beta-neuraminate(in) + AMP(out) = CMP-N-acetyl-beta-neuraminate(out) + AMP(in). The catalysed reaction is CDP-L-ribitol(in) + CDP(out) = CDP-L-ribitol(out) + CDP(in). It catalyses the reaction UMP(out) + CMP-N-acetyl-beta-neuraminate(in) = UMP(in) + CMP-N-acetyl-beta-neuraminate(out). Its function is as follows. Transports CMP-sialic acid from the cytosol into the Golgi apparatus, functioning as an antiporter that exchanges CMP-sialic acid for CMP. Binds both CMP-sialic acid and free CMP, but has higher affinity for free CMP. Also able to exchange CMP-sialic acid for AMP and UMP. Also mediates the transport of CDP-ribitol. In Mus musculus (Mouse), this protein is CMP-sialic acid transporter.